A 398-amino-acid chain; its full sequence is Succinate--CoA ligase [ADP-forming] subunit beta (398 aa).

The 246-residue stretch at 9–254 (KRLLHTYGAP…LTEEDPKEIE (246 aa)) folds into the ATP-grasp domain. ATP-binding positions include lysine 46, 53–55 (GRG), glutamate 109, alanine 112, and glutamate 117. Mg(2+) contacts are provided by asparagine 209 and aspartate 223. Substrate contacts are provided by residues asparagine 274 and 331 to 333 (GIM).

Belongs to the succinate/malate CoA ligase beta subunit family. In terms of assembly, heterotetramer of two alpha and two beta subunits. Mg(2+) is required as a cofactor.

It catalyses the reaction succinate + ATP + CoA = succinyl-CoA + ADP + phosphate. The enzyme catalyses GTP + succinate + CoA = succinyl-CoA + GDP + phosphate. It functions in the pathway carbohydrate metabolism; tricarboxylic acid cycle; succinate from succinyl-CoA (ligase route): step 1/1. Its function is as follows. Succinyl-CoA synthetase functions in the citric acid cycle (TCA), coupling the hydrolysis of succinyl-CoA to the synthesis of either ATP or GTP and thus represents the only step of substrate-level phosphorylation in the TCA. The beta subunit provides nucleotide specificity of the enzyme and binds the substrate succinate, while the binding sites for coenzyme A and phosphate are found in the alpha subunit. The protein is Succinate--CoA ligase [ADP-forming] subunit beta of Brucella abortus (strain S19).